The sequence spans 680 residues: DNA-directed RNA polymerase subunit beta' (680 aa).

Residues Cys-69, Cys-71, Cys-87, and Cys-90 each coordinate Zn(2+). Mg(2+) contacts are provided by Asp-489, Asp-491, and Asp-493.

This sequence belongs to the RNA polymerase beta' chain family. RpoC1 subfamily. In plastids the minimal PEP RNA polymerase catalytic core is composed of four subunits: alpha, beta, beta', and beta''. When a (nuclear-encoded) sigma factor is associated with the core the holoenzyme is formed, which can initiate transcription. Requires Mg(2+) as cofactor. It depends on Zn(2+) as a cofactor.

It is found in the plastid. It localises to the chloroplast. It carries out the reaction RNA(n) + a ribonucleoside 5'-triphosphate = RNA(n+1) + diphosphate. DNA-dependent RNA polymerase catalyzes the transcription of DNA into RNA using the four ribonucleoside triphosphates as substrates. This Draba nemorosa (Woodland whitlowgrass) protein is DNA-directed RNA polymerase subunit beta'.